Consider the following 433-residue polypeptide: Acetyl-CoA acetyltransferase erg10A, mitochondrial (433 aa).

A mitochondrion-targeting transit peptide spans 1-34; sequence MAIQTTTGLAARLVAKRATFPASRRNFSASRSAL. Catalysis depends on Cys-124, which acts as the Acyl-thioester intermediate. Tyr-219 contributes to the K(+) binding site. Residues Asn-229 and Lys-262 each coordinate CoA. K(+) is bound at residue Ala-280. Ser-284 contributes to the CoA binding site. Residues His-387 and Cys-415 each act as proton acceptor in the active site. Asn-416 serves as a coordination point for chloride.

This sequence belongs to the thiolase-like superfamily. Thiolase family. As to quaternary structure, homotetramer. K(+) is required as a cofactor.

It is found in the mitochondrion. The enzyme catalyses 2 acetyl-CoA = acetoacetyl-CoA + CoA. It participates in metabolic intermediate biosynthesis; (R)-mevalonate biosynthesis; (R)-mevalonate from acetyl-CoA: step 1/3. In terms of biological role, mitochondrial acetyl-CoA acetyltransferase that catalyzes both the formation and degradation of acetoacetyl-CoA. Has no overlapping function with erg10B and seems not to be involved in ergosterol biosynthesis. Plays an important role in growth, morphogenesis and maintaining mitochondrial function including the response to oxidative stresses. The chain is Acetyl-CoA acetyltransferase erg10A, mitochondrial from Aspergillus fumigatus (strain ATCC MYA-4609 / CBS 101355 / FGSC A1100 / Af293) (Neosartorya fumigata).